The following is a 189-amino-acid chain: B3 domain-containing protein At2g32645 (189 aa).

The TF-B3 DNA-binding region spans 33–133 (FNQVKTPDFL…KLCFALTPKI (101 aa)).

The protein localises to the nucleus. The polypeptide is B3 domain-containing protein At2g32645 (Arabidopsis thaliana (Mouse-ear cress)).